A 683-amino-acid polypeptide reads, in one-letter code: PTS system mannose-specific EIIBCA component (683 aa).

The region spanning 1 to 89 (MASKLTTTSQ…LKLDGMKHFA (89 aa)) is the PTS EIIB type-1 domain. The Phosphocysteine intermediate; for EIIB activity role is filled by Cys-28. Residues 117 to 476 (EFLSDTFRPI…NEERDEARAK (360 aa)) enclose the PTS EIIC type-1 domain. Helical transmembrane passes span 126–146 (ILWA…ADTF), 162–182 (YVFL…MVGA), 193–213 (WIGA…LGSA), 225–245 (VLND…GLYW), 260–280 (MVFV…FLLG), 303–323 (FILS…GLHW), 344–364 (PMGA…LLSI), 376–396 (LGGM…YGVL), 409–429 (GCLA…AFVF), and 442–462 (LGYT…VLAL). Residues 550–654 (DPIFAAGKLG…PLITPVVVSN (105 aa)) enclose the PTS EIIA type-1 domain. His-602 functions as the Tele-phosphohistidine intermediate; for EIIA activity in the catalytic mechanism.

Its subcellular location is the cell membrane. The enzyme catalyses D-mannose(out) + N(pros)-phospho-L-histidyl-[protein] = D-mannose 6-phosphate(in) + L-histidyl-[protein]. The phosphoenolpyruvate-dependent sugar phosphotransferase system (sugar PTS), a major carbohydrate active -transport system, catalyzes the phosphorylation of incoming sugar substrates concomitantly with their translocation across the cell membrane. This system is involved in mannose transport. The chain is PTS system mannose-specific EIIBCA component (ptsM) from Corynebacterium glutamicum (strain ATCC 13032 / DSM 20300 / JCM 1318 / BCRC 11384 / CCUG 27702 / LMG 3730 / NBRC 12168 / NCIMB 10025 / NRRL B-2784 / 534).